The chain runs to 512 residues: Maturase K (512 aa).

Belongs to the intron maturase 2 family. MatK subfamily.

It is found in the plastid. Its subcellular location is the chloroplast. Usually encoded in the trnK tRNA gene intron. Probably assists in splicing its own and other chloroplast group II introns. This Oenothera biennis (German evening primrose) protein is Maturase K.